A 225-amino-acid polypeptide reads, in one-letter code: MSDSVAGDFPPDPLLASGAFISSAGDGTLDSSAKRRPIQGGIGISGSGESVRIGMANGTDQVNHQTESKSRKRAAPGDNWLPPGWRVEDKIRTSGATAGSVDKYYYEPNTGRKFRSRTEVLYYLEHGTSKRGTKKAENTYFNPDHFEGQGSNRVTRTATVPPPPPPPLDFDFKNPPDKVSWSMANAGEEGWIPNIGDVKVQDSVRRDWSTAFTFITSRNPSKVSA.

The disordered stretch occupies residues 25–92; that stretch reads GDGTLDSSAK…PGWRVEDKIR (68 aa). Positions 71-146 constitute an MBD domain; sequence RKRAAPGDNW…ENTYFNPDHF (76 aa).

In terms of assembly, homodimer and heterodimer with MBD5. Interacts with DDM1 via its MBD domain. Interacts with NTF2, RPS2C, HDA6 and AGO4. In terms of tissue distribution, expressed in rosette leaves, buds, flowers, stems, mature seeds and roots.

The protein localises to the nucleus. The protein resides in the chromosome. It localises to the nucleolus. Functionally, transcriptional regulator that binds CpG, CpNpN and CpNpG (N is A, T, or C) islands in promoters regardless the DNA methylation status. Plays probably a role in gene silencing. May associate with histone deacetylase proteins (HDAC). Required for nucleolar dominance that consist in the silencing of rRNA genes inherited from one progenitor in genetic hybrids. Recruited to rRNA genes in a DRM2-dependent manner. Maintains gene silencing by interacting with RNA binding proteins (e.g. NTF2, RPS2C, HDA6 and AGO4) and by regulating DNA methylation status. This is Methyl-CpG-binding domain-containing protein 6 from Arabidopsis thaliana (Mouse-ear cress).